A 175-amino-acid polypeptide reads, in one-letter code: NADH-ubiquinone oxidoreductase chain 6 (175 aa).

6 consecutive transmembrane segments (helical) span residues 1-21, 25-45, 47-67, 88-108, 115-137, and 149-169; these read MMTYVVFILSIVFVIGLIGSP, SPIYGGLGLIVSGGAGCGMVL, FGGSFLGLMVFLVYLGGMLVV, VVLGAFLLGLMMEFLAVLYVL, LVFKFSGLGDWVVYGMSDFGVFS, and YGVWLVVVTGWSLFVGVVVIM.

It belongs to the complex I subunit 6 family. As to quaternary structure, core subunit of respiratory chain NADH dehydrogenase (Complex I) which is composed of 45 different subunits.

Its subcellular location is the mitochondrion inner membrane. It carries out the reaction a ubiquinone + NADH + 5 H(+)(in) = a ubiquinol + NAD(+) + 4 H(+)(out). Its function is as follows. Core subunit of the mitochondrial membrane respiratory chain NADH dehydrogenase (Complex I) which catalyzes electron transfer from NADH through the respiratory chain, using ubiquinone as an electron acceptor. Essential for the catalytic activity and assembly of complex I. The chain is NADH-ubiquinone oxidoreductase chain 6 (MT-ND6) from Hippopotamus amphibius (Hippopotamus).